Consider the following 430-residue polypeptide: Aspartate aminotransferase, mitochondrial (430 aa).

A mitochondrion-targeting transit peptide spans 1 to 29; that stretch reads MALLHSARVLSGVASAFHPGLAAAASARA. The residue at position 48 (Thr48) is a Phosphothreonine. Position 59 is an N6-acetyllysine (Lys59). A substrate-binding site is contributed by Gly65. Lys73 is subject to N6-acetyllysine; alternate. Lys73 bears the N6-succinyllysine; alternate mark. Lys82 is modified (N6-acetyllysine). Lys90 carries the N6-acetyllysine; alternate modification. An N6-succinyllysine; alternate modification is found at Lys90. Tyr96 is modified (3'-nitrotyrosine; alternate). Residue Tyr96 is modified to Phosphotyrosine; alternate. Lys122 is subject to N6-acetyllysine; alternate. Lys122 carries the N6-succinyllysine; alternate modification. Ser143 is modified (phosphoserine). The residue at position 159 (Lys159) is an N6-acetyllysine; alternate. Position 159 is an N6-succinyllysine; alternate (Lys159). Trp162 contributes to the substrate binding site. Lys185 is modified (N6-acetyllysine; alternate). An N6-succinyllysine; alternate modification is found at Lys185. Substrate is bound at residue Asn215. Position 227 is an N6-succinyllysine (Lys227). At Lys234 the chain carries N6-acetyllysine. Lys279 and Lys296 each carry N6-acetyllysine; alternate. An N6-(pyridoxal phosphate)lysine; alternate modification is found at Lys279. An N6-succinyllysine; alternate modification is found at Lys296. Lys302 is modified (N6-acetyllysine). Residue Lys309 is modified to N6-acetyllysine; alternate. Lys309 is modified (N6-succinyllysine; alternate). Position 313 is an asymmetric dimethylarginine (Arg313). Lys338 is subject to N6-acetyllysine; alternate. Lys338 is subject to N6-succinyllysine; alternate. Lys345 bears the N6-acetyllysine mark. At Lys363 the chain carries N6-acetyllysine; alternate. Residue Lys363 is modified to N6-succinyllysine; alternate. 2 positions are modified to N6-acetyllysine: Lys364 and Lys387. N6-acetyllysine; alternate occurs at positions 396 and 404. 2 positions are modified to N6-succinyllysine; alternate: Lys396 and Lys404. Substrate is bound at residue Arg407.

Belongs to the class-I pyridoxal-phosphate-dependent aminotransferase family. Homodimer. The cofactor is pyridoxal 5'-phosphate.

It is found in the mitochondrion matrix. The protein resides in the cell membrane. It carries out the reaction L-aspartate + 2-oxoglutarate = oxaloacetate + L-glutamate. The enzyme catalyses L-kynurenine + 2-oxoglutarate = kynurenate + L-glutamate + H2O. Its function is as follows. Catalyzes the irreversible transamination of the L-tryptophan metabolite L-kynurenine to form kynurenic acid (KA). As a member of the malate-aspartate shuttle, it has a key role in the intracellular NAD(H) redox balance. Is important for metabolite exchange between mitochondria and cytosol, and for amino acid metabolism. Facilitates cellular uptake of long-chain free fatty acids. In Oryctolagus cuniculus (Rabbit), this protein is Aspartate aminotransferase, mitochondrial (GOT2).